Consider the following 298-residue polypeptide: MRGLDYKWIEALDAVVAQGGFERAAEELYISQSAVSQRIKQLERFLAQPVLIREQPPKPTPVGKKLLGLYRRVRILEHELIPELMNDDTAKPIQLALATNADSLATWLLPALKEVMTLRQVELNLAIYGESRSIEKLKSGEVAGAISLESQPIAGCKADYLGRMDYVCVASPDFYQRYFAAGVNYQTLRKAPAVSYDQYDDLHNRFLHDHFNISRDSIINHNVGSSEAFVRLAVSGIAYCLIPKLQIEQELASGVLMDITPGFLLSYRIYWHHWQLESGVLKEISQAIVQYAQAHLPQ.

Residues 4–60 form the HTH lysR-type domain; sequence LDYKWIEALDAVVAQGGFERAAEELYISQSAVSQRIKQLERFLAQPVLIREQPPKPT. Positions 21–40 form a DNA-binding region, H-T-H motif; that stretch reads FERAAEELYISQSAVSQRIK.

The protein belongs to the LysR transcriptional regulatory family. As to quaternary structure, homodimer.

In terms of biological role, controls the transcription of genes involved in arginine and lysine metabolism. This chain is HTH-type transcriptional regulator ArgP, found in Vibrio vulnificus (strain CMCP6).